A 355-amino-acid chain; its full sequence is Uroporphyrinogen decarboxylase (355 aa).

Substrate contacts are provided by residues 27–31, Asp78, Tyr155, Ser210, and His328; that span reads RQAGR.

It belongs to the uroporphyrinogen decarboxylase family. As to quaternary structure, homodimer.

The protein localises to the cytoplasm. The enzyme catalyses uroporphyrinogen III + 4 H(+) = coproporphyrinogen III + 4 CO2. It functions in the pathway porphyrin-containing compound metabolism; protoporphyrin-IX biosynthesis; coproporphyrinogen-III from 5-aminolevulinate: step 4/4. Functionally, catalyzes the decarboxylation of four acetate groups of uroporphyrinogen-III to yield coproporphyrinogen-III. This Pseudomonas fluorescens (strain ATCC BAA-477 / NRRL B-23932 / Pf-5) protein is Uroporphyrinogen decarboxylase.